Consider the following 197-residue polypeptide: Xanthine phosphoribosyltransferase (197 aa).

The xanthine site is built by L20 and N27. 128–132 (ANGQA) contributes to the 5-phospho-alpha-D-ribose 1-diphosphate binding site. K156 provides a ligand contact to xanthine.

The protein belongs to the purine/pyrimidine phosphoribosyltransferase family. Xpt subfamily. Homodimer.

It is found in the cytoplasm. It carries out the reaction XMP + diphosphate = xanthine + 5-phospho-alpha-D-ribose 1-diphosphate. The protein operates within purine metabolism; XMP biosynthesis via salvage pathway; XMP from xanthine: step 1/1. Its function is as follows. Converts the preformed base xanthine, a product of nucleic acid breakdown, to xanthosine 5'-monophosphate (XMP), so it can be reused for RNA or DNA synthesis. In Bacillus cereus (strain ATCC 14579 / DSM 31 / CCUG 7414 / JCM 2152 / NBRC 15305 / NCIMB 9373 / NCTC 2599 / NRRL B-3711), this protein is Xanthine phosphoribosyltransferase.